The following is a 1459-amino-acid chain: DNA-binding protein RFX7 (1459 aa).

Residues Met1–Gly27 are disordered. Residues Gln12–Leu21 show a composition bias toward low complexity. A DNA-binding region (RFX-type winged-helix) is located at residues Ala108–Ala183. A PxLPxI/L motif; mediates interaction with ANKRA2 and RFXANK motif is present at residues Pro188 to Leu193. Disordered stretches follow at residues Ala303–Gly347, Ser404–Arg428, Pro482–Glu590, Phe634–Lys659, Gly688–Pro716, and Ser918–Ser1016. Polar residues-rich tracts occupy residues Ser404 to Pro416 and Pro482 to Thr502. Residues Ser521–Ala534 are compositionally biased toward low complexity. The span at Val537–Pro549 shows a compositional bias: basic and acidic residues. Polar residues-rich tracts occupy residues Pro562–Gly578, Phe634–Ser645, and Thr706–Pro716. Over residues Thr947–Thr963 the composition is skewed to pro residues. The segment covering Gly971–Cys1009 has biased composition (polar residues).

This sequence belongs to the RFX family. Interacts (via PxLPxI/L motif) with RFXANK (via ankyrin repeats). Interacts (via PxLPxI/L motif) with ANKRA2 (via ankyrin repeats). As to expression, expressed in spleen and lymph node and to a lower extend in brain (at protein level). Expressed in lymphoid organs and lymphoid cell subsets. Expressed throughout natural killer (NK) cell maturation.

The protein localises to the nucleus. In terms of biological role, transcription factor. Acts as a transcriptional activator by binding to promoter regions of target genes, such as Rec8, Mxd4 and Ddit4. Plays a role in natural killer (NK) cell maintenance and immunity. May play a role in the process of ciliogenesis in the neural tube and neural tube closure. The chain is DNA-binding protein RFX7 from Mus musculus (Mouse).